A 264-amino-acid chain; its full sequence is MKIEAVIFDWAGTTVDYGCFAPLEVFMEIFHKRGVGITAEEARKPMGLLKIDHVRALTEMPRIANEWNRIFGQLPTETDIQEMYEEFEEILFAILPRYASPIHGVKEVIASLRERGIKIGSTTGYTREMMDIVAKEAALQGYKPDFLVTPDDVPAGRPYPWMCYKNAMELGVYPMNHMIKIGDTVSDMKEGRNAGMWTVGVILGSSELGLSEEEVENMDSAELREKIEVVRNRFVENGAHFTIETMQELESVMERIEKQELIIS.

The Nucleophile role is filled by Asp9. Positions 9 and 11 each coordinate Mg(2+). The active-site Schiff-base intermediate with substrate is Lys50. Mg(2+) is bound at residue Asp183.

It belongs to the HAD-like hydrolase superfamily. PhnX family. As to quaternary structure, homodimer. Mg(2+) is required as a cofactor.

The enzyme catalyses phosphonoacetaldehyde + H2O = acetaldehyde + phosphate + H(+). Its function is as follows. Involved in phosphonate degradation. In Bacillus cereus (strain AH820), this protein is Phosphonoacetaldehyde hydrolase.